The chain runs to 104 residues: Large ribosomal subunit protein uL24 (104 aa).

Belongs to the universal ribosomal protein uL24 family. Part of the 50S ribosomal subunit.

Its function is as follows. One of two assembly initiator proteins, it binds directly to the 5'-end of the 23S rRNA, where it nucleates assembly of the 50S subunit. Functionally, one of the proteins that surrounds the polypeptide exit tunnel on the outside of the subunit. This is Large ribosomal subunit protein uL24 from Halothermothrix orenii (strain H 168 / OCM 544 / DSM 9562).